Here is a 55-residue protein sequence, read N- to C-terminus: Rubredoxin-1 (55 aa).

Residues 1-54 enclose the Rubredoxin-like domain; that stretch reads MKKWQCVVCGLIYDEAKGWPEEGIEAGTRWEDVPEDWLCPDCGVGKLDFEMIEI. The Fe cation site is built by Cys-6, Cys-9, Cys-39, and Cys-42.

This sequence belongs to the rubredoxin family. Fe(3+) is required as a cofactor.

It is found in the cytoplasm. It functions in the pathway hydrocarbon metabolism; alkane degradation. Involved in the hydrocarbon hydroxylating system, which transfers electrons from NADH to rubredoxin reductase and then through rubredoxin to alkane 1 monooxygenase. The sequence is that of Rubredoxin-1 (rubA1) from Pseudomonas aeruginosa (strain ATCC 15692 / DSM 22644 / CIP 104116 / JCM 14847 / LMG 12228 / 1C / PRS 101 / PAO1).